Here is a 440-residue protein sequence, read N- to C-terminus: Light-independent protochlorophyllide reductase subunit N (440 aa).

Positions 1–24 are disordered; sequence MTCRPALSDSHPPEPGTPSSPSFG. [4Fe-4S] cluster contacts are provided by cysteine 42, cysteine 67, and cysteine 128.

It belongs to the BchN/ChlN family. As to quaternary structure, protochlorophyllide reductase is composed of three subunits; BchL, BchN and BchB. Forms a heterotetramer of two BchB and two BchN subunits. Requires [4Fe-4S] cluster as cofactor.

It carries out the reaction chlorophyllide a + oxidized 2[4Fe-4S]-[ferredoxin] + 2 ADP + 2 phosphate = protochlorophyllide a + reduced 2[4Fe-4S]-[ferredoxin] + 2 ATP + 2 H2O. It participates in porphyrin-containing compound metabolism; bacteriochlorophyll biosynthesis (light-independent). Component of the dark-operative protochlorophyllide reductase (DPOR) that uses Mg-ATP and reduced ferredoxin to reduce ring D of protochlorophyllide (Pchlide) to form chlorophyllide a (Chlide). This reaction is light-independent. The NB-protein (BchN-BchB) is the catalytic component of the complex. The sequence is that of Light-independent protochlorophyllide reductase subunit N from Rhodospirillum rubrum (strain ATCC 11170 / ATH 1.1.1 / DSM 467 / LMG 4362 / NCIMB 8255 / S1).